Here is a 534-residue protein sequence, read N- to C-terminus: T-complex protein 1 subunit gamma (534 aa).

Methionine 1 bears the N-acetylmethionine mark. Residue serine 257 is modified to Phosphoserine. Cysteine 371 and cysteine 377 are joined by a disulfide.

This sequence belongs to the TCP-1 chaperonin family. Heterooligomeric complex of about 850 to 900 kDa that forms two stacked rings, 12 to 16 nm in diameter.

Its subcellular location is the cytoplasm. Its function is as follows. Molecular chaperone; assists the folding of proteins upon ATP hydrolysis. Known to play a role, in vitro, in the folding of actin and tubulin. In yeast may play a role in mitotic spindle formation. The sequence is that of T-complex protein 1 subunit gamma (CCT3) from Saccharomyces cerevisiae (strain ATCC 204508 / S288c) (Baker's yeast).